Consider the following 301-residue polypeptide: Dihydroorotate dehydrogenase B (NAD(+)), catalytic subunit (301 aa).

Substrate contacts are provided by residues lysine 44, asparagine 68–leucine 72, and asparagine 122. Lysine 44–serine 45 is a binding site for FMN. Asparagine 122 lines the FMN pocket. Cysteine 125 functions as the Nucleophile in the catalytic mechanism. FMN contacts are provided by lysine 160 and isoleucine 186. Position 187–188 (asparagine 187–threonine 188) interacts with substrate. FMN-binding positions include glycine 212, glycine 238–glycine 239, and glycine 260–serine 261.

The protein belongs to the dihydroorotate dehydrogenase family. Type 1 subfamily. Heterotetramer of 2 PyrK and 2 PyrD type B subunits. The cofactor is FMN.

The protein resides in the cytoplasm. The catalysed reaction is (S)-dihydroorotate + NAD(+) = orotate + NADH + H(+). It functions in the pathway pyrimidine metabolism; UMP biosynthesis via de novo pathway; orotate from (S)-dihydroorotate (NAD(+) route): step 1/1. In terms of biological role, catalyzes the conversion of dihydroorotate to orotate with NAD(+) as electron acceptor. In Methanocella arvoryzae (strain DSM 22066 / NBRC 105507 / MRE50), this protein is Dihydroorotate dehydrogenase B (NAD(+)), catalytic subunit (pyrD).